The following is a 236-amino-acid chain: Bax inhibitor 1 (236 aa).

The Cytoplasmic segment spans residues methionine 1 to lysine 29. Lysine 7 participates in a covalent cross-link: Glycyl lysine isopeptide (Lys-Gly) (interchain with G-Cter in ubiquitin). Residues valine 30–valine 50 form a helical membrane-spanning segment. Topologically, residues threonine 51–histidine 52 are lumenal. The chain crosses the membrane as a helical span at residues phenylalanine 53 to alanine 73. Over threonine 74 to glycine 86 the chain is Cytoplasmic. The chain crosses the membrane as a helical span at residues leucine 87–isoleucine 107. Topologically, residues alanine 108–serine 112 are lumenal. Residues isoleucine 113–leucine 133 traverse the membrane as a helical segment. Residues tyrosine 134–serine 139 lie on the Cytoplasmic side of the membrane. A helical membrane pass occupies residues tyrosine 140–glycine 160. At asparagine 161–serine 166 the chain is on the lumenal side. The chain crosses the membrane as a helical span at residues valine 167–phenylalanine 187. Topologically, residues aspartate 188–histidine 206 are cytoplasmic. Positions cysteine 207–methionine 227 form an intramembrane region, helical. Residues asparagine 228 to lysine 236 lie on the Cytoplasmic side of the membrane.

The protein belongs to the BI1 family. Interacts with BCL2 and BCL2L1. Interacts with ERN1. Post-translationally, ubiquitinated by BFAR, leading to proteasomal degradation.

The protein localises to the endoplasmic reticulum membrane. In terms of biological role, endoplasmic reticulum (ER)-resident protein that confers cellular protection as an anti-apoptotic protein by limiting multiple stress-inducing pathways surrounding the endoplasmic reticulum and mitochondria. Inhibits the activities of the key sensor for the endoplasmic reticulum unfolded protein response IRE1alpha/ERN1 both directly and by blocking BAX/BAK binding. Modulates ER calcium homeostasis by acting as a calcium-leak channel. Negatively regulates autophagy and autophagosome formation, especially during periods of nutrient deprivation, and reduces cell survival during starvation. The polypeptide is Bax inhibitor 1 (TMBIM6) (Bos taurus (Bovine)).